The sequence spans 2048 residues: Myoferlin (2048 aa).

A C2 1 domain is found at 1–101; that stretch reads MLRVIVESAT…IGDQNRSLPY (101 aa). Topologically, residues 1–2012 are cytoplasmic; it reads MLRVIVESAT…MRFIVWRRFK (2012 aa). The interval 124-176 is disordered; sequence YTPPSAPHPNDPSGTSVPGMGEEEEEDQGDEDRVDGIVRGPGPKGPSGTVSEA. Positions 144–156 are enriched in acidic residues; the sequence is GEEEEEDQGDEDR. Residues Ser170 and Ser174 each carry the phosphoserine modification. C2 domains lie at 183 to 300 and 339 to 475; these read TKGK…RKWL and DSDD…EATT. The tract at residues 186 to 281 is necessary for interaction with EHD2; it reads KSSRRMLSNK…RADCLMGEFK (96 aa). Ca(2+) is bound by residues Asp390, Asp396, Asp444, Asp446, and Asp452. 2 positions are modified to N6-acetyllysine: Lys540 and Lys871. 2 consecutive C2 domains span residues 1110-1238 and 1269-1397; these read GANT…LLWH and LPSQ…GKED. Ca(2+) is bound by residues Asp1142, Asp1148, Asp1204, and Asp1206. Position 1494 is an N6-acetyllysine (Lys1494). 2 C2 domains span residues 1523 to 1641 and 1759 to 1907; these read PAPP…SHCG and GPPG…EKCS. 7 residues coordinate Ca(2+): Asp1556, Asp1562, Asp1611, Asp1613, Asp1878, Ser1881, and Asp1884. Residues 1964–1975 are compositionally biased toward basic and acidic residues; that stretch reads EADERPAGKGRS. The segment at 1964–1986 is disordered; the sequence is EADERPAGKGRSEPNMNPKLDPP. The chain crosses the membrane as a helical span at residues 2013–2033; the sequence is WVIIGLLLLLILLLFVAVLLY. The Extracellular portion of the chain corresponds to 2034–2048; it reads SLPNYLSMKIVRPNA.

Belongs to the ferlin family. In terms of assembly, interacts with EHD1. Interacts with EHD2; the interaction is direct. Interacts with DNM2 and KDR. Interacts with RIPOR2. The cofactor is Ca(2+). In terms of tissue distribution, expressed in myoblasts (at protein level). Expressed in endothelial cells.

Its subcellular location is the cell membrane. The protein resides in the nucleus membrane. It is found in the cytoplasmic vesicle membrane. In terms of biological role, calcium/phospholipid-binding protein that plays a role in the plasmalemma repair mechanism of endothelial cells that permits rapid resealing of membranes disrupted by mechanical stress. Involved in endocytic recycling. Implicated in VEGF signal transduction by regulating the levels of the receptor KDR. The polypeptide is Myoferlin (Myof) (Mus musculus (Mouse)).